A 59-amino-acid chain; its full sequence is Putative antitoxin AF_1090 (59 aa).

It belongs to the UPF0165 family.

Functionally, possibly the antitoxin component of a type II toxin-antitoxin (TA) system. The polypeptide is Putative antitoxin AF_1090 (Archaeoglobus fulgidus (strain ATCC 49558 / DSM 4304 / JCM 9628 / NBRC 100126 / VC-16)).